We begin with the raw amino-acid sequence, 493 residues long: Reticulophagy regulator 1 (493 aa).

The disordered stretch occupies residues Met-1 to Gln-52. Topologically, residues Met-1–Glu-55 are cytoplasmic. Positions Gly-37 to Gln-52 are enriched in low complexity. Residues Ala-56–Gly-76 form a helical membrane-spanning segment. Over Gly-77–Arg-87 the chain is Lumenal. A reticulon homology domain region spans residues Asp-80–Phe-229. Residues Pro-88–Thr-108 traverse the membrane as a helical segment. At Pro-109–His-114 the chain is on the cytoplasmic side. The helical transmembrane segment at Leu-115–Ser-135 threads the bilayer. Residues Arg-136–Thr-204 lie on the Lumenal side of the membrane. The residue at position 145 (Ser-145) is a Phosphoserine. Position 147 is a phosphoserine; by CAMK2B (Ser-147). The residue at position 149 (Ser-149) is a Phosphoserine. The helical transmembrane segment at Ile-205–Leu-225 threads the bilayer. The Cytoplasmic segment spans residues Cys-226–His-493. Over residues Phe-315–Asp-326 the composition is skewed to polar residues. 2 disordered regions span residues Phe-315–Leu-394 and Ala-435–His-493. Over residues Asp-330–Ser-344 the composition is skewed to basic and acidic residues. Position 353 is a phosphothreonine (Thr-353). Basic and acidic residues predominate over residues Glu-368–Ser-388. Residues Glu-441 to Glu-463 are compositionally biased toward acidic residues. An LIR motif motif is present at residues Asp-449–Leu-454. Positions Gly-467–Leu-486 are enriched in polar residues.

This sequence belongs to the RETREG family. Homooligomer; oligomerization is enhanced following endoplasmic reticulum stress and is mediated by the reticulon homology domain. Interacts with ATG8 family modifier proteins MAP1LC3A, MAP1LC3B, GABARAP, GABARAPL1 and GABARAPL2. Phosphorylation at Ser-147 by CAMK2B enhances oligomerization and membrane scission and reticulophagy activity.

It is found in the golgi apparatus. Its subcellular location is the cis-Golgi network membrane. The protein localises to the endoplasmic reticulum membrane. Its function is as follows. Endoplasmic reticulum (ER)-anchored autophagy regulator which mediates ER delivery into lysosomes through sequestration into autophagosomes. Promotes membrane remodeling and ER scission via its membrane bending capacity and targets the fragments into autophagosomes via interaction with ATG8 family proteins. Active under basal conditions. Required for collagen quality control in a LIR motif-dependent manner. Required for long-term survival of nociceptive and autonomic ganglion neurons. The sequence is that of Reticulophagy regulator 1 (RETREG1) from Bos taurus (Bovine).